Reading from the N-terminus, the 189-residue chain is Inner membrane-spanning protein YciB (189 aa).

Transmembrane regions (helical) follow at residues 23 to 43 (ILLA…FVWW), 54 to 74 (ITLA…DAAF), 82 to 102 (VNWL…KTLI), 120 to 140 (LNLA…YVFK), and 150 to 170 (FKLF…GVYL).

The protein belongs to the YciB family.

The protein resides in the cell inner membrane. Its function is as follows. Plays a role in cell envelope biogenesis, maintenance of cell envelope integrity and membrane homeostasis. The chain is Inner membrane-spanning protein YciB from Chromohalobacter salexigens (strain ATCC BAA-138 / DSM 3043 / CIP 106854 / NCIMB 13768 / 1H11).